Here is a 1904-residue protein sequence, read N- to C-terminus: Pericentriolar material 1 protein (1904 aa).

Disordered stretches follow at residues 1–135, 159–179, 265–303, 338–361, 376–407, 430–489, and 520–559; these read MATG…SGEP, QEDGRGEPTMDSSQARDPQQE, HDSQTQSVPDNRRQAESLSLTREISQSRNSSVSEHQSDE, NSSFFPASSSPQRSIDQRSTTSAA, NSLASAPYPPDSLASQNESEEDDNLNPTEKLQ, SDMM…GTNN, and CHNREDDKHADLPHGEDDEVEEDRASEDSMSSHRSSLGDV. Residues 43–60 are compositionally biased toward basic and acidic residues; sequence RSSEKNKKKLGGEAETRL. Over residues 107–118 the composition is skewed to polar residues; the sequence is INFSDLDQINTN. The stretch at 171–212 forms a coiled coil; that stretch reads SQARDPQQEAKEELENLKKQHDLLKRMLQQQEQLKALQGRQA. Over residues 280-298 the composition is skewed to polar residues; that stretch reads ESLSLTREISQSRNSSVSE. Residues 301–334 adopt a coiled-coil conformation; sequence SDEKAQLFNKMRMLQGKKQKMDKLLGELHTLRDQ. Positions 338–348 are enriched in low complexity; it reads NSSFFPASSSP. Residues 349-361 show a composition bias toward polar residues; sequence QRSIDQRSTTSAA. Residues 403–429 are a coiled coil; the sequence is TEKLQKLNEVRKRLNELRELVHYYEQT. The span at 442–452 shows a compositional bias: acidic residues; the sequence is KEEEETEDSGS. Over residues 461–470 the composition is skewed to polar residues; the sequence is PVTNIRNPQG. A compositionally biased stretch (low complexity) spans 471 to 482; that stretch reads ISSWSEINSNSN. The segment covering 520–534 has biased composition (basic and acidic residues); it reads CHNREDDKHADLPHG. Over residues 535–544 the composition is skewed to acidic residues; sequence EDDEVEEDRA. 2 coiled-coil regions span residues 562 to 592 and 636 to 686; these read DAEFEQKINRLMAAKQKLRQLQNLAAMVQDD and LNEK…LQSA. The tract at residues 686–706 is disordered; it reads AGLGNSPANRQTSPATSTPAM. Positions 687-706 are enriched in polar residues; that stretch reads GLGNSPANRQTSPATSTPAM. Residues 731-768 are a coiled coil; it reads SEMRRHEILREELRRRRKQLEALMAEHQRRRELAETIS. Residues 773–840 form a disordered region; that stretch reads SVKSEGSEAQ…PSMNDSFSAY (68 aa). Polar residues predominate over residues 779–804; the sequence is SEAQRTPQQSRTENRTMATWGGSTQC. Positions 806-830 are enriched in acidic residues; that stretch reads LDEEDGDEDGYLSDGLDQAEEEEDA. Coiled coils occupy residues 895–927 and 970–1000; these read SELSYVEEKEQWQEQINQLKKQLEFSVSICQTL and TQLSWQQNNVQRLKQMLNDLMHQQEQQCQEK. 3 disordered regions span residues 991-1018, 1063-1082, and 1088-1225; these read HQQEQQCQEKPSRKERGSSAPPPPSPVF, GFPQSSEQQQHPLDHNASGK, and FPKP…TGYD. Polar residues-rich tracts occupy residues 1064-1073 and 1093-1102; these read FPQSSEQQQH and ESSSSTGAEN. Basic and acidic residues predominate over residues 1103–1117; sequence QRSHRQPEDEVEKRS. Over residues 1141–1150 the composition is skewed to polar residues; it reads SVQSIASGHK. Positions 1151-1162 are enriched in basic and acidic residues; it reads NQSDTSRRRNFD. A compositionally biased stretch (low complexity) spans 1173 to 1182; sequence PDPVDPTTVT. A coiled-coil region spans residues 1421 to 1447; it reads IHLDQALARMREYERMKIEAESTLDSE. Residues 1616–1625 show a composition bias toward basic and acidic residues; it reads AKEDKDETET. Disordered stretches follow at residues 1616 to 1741, 1774 to 1838, and 1865 to 1904; these read AKED…VKGE, MKTE…SDED, and EAQTNSLSDELLGGGGEQDRELVGDAQTLKEPETFGAQSA. Positions 1649–1658 are enriched in acidic residues; that stretch reads SDQEEDEESE. The segment covering 1668–1678 has biased composition (polar residues); sequence KAETQALTNYG. Acidic residues predominate over residues 1680 to 1695; that stretch reads GEDENEDEEIEFEEGP. Composition is skewed to polar residues over residues 1698 to 1720, 1728 to 1737, and 1779 to 1791; these read VQTSLQASSETATENEQISSQEL, ILSSEQQSVN, and SSSSLPGNETQML. Low complexity predominate over residues 1800 to 1812; the sequence is SSAGSSESSMAGS. Residues 1881 to 1897 are compositionally biased toward basic and acidic residues; that stretch reads EQDRELVGDAQTLKEPE.

The protein belongs to the PCM1 family. Self-associates.

It localises to the cytoplasm. Its subcellular location is the cytoskeleton. The protein resides in the microtubule organizing center. The protein localises to the centrosome. It is found in the cytoplasmic granule. It localises to the centriolar satellite. Its subcellular location is the cilium basal body. In terms of biological role, required for centrosome assembly and function. Essential for the correct localization of several centrosomal proteins including CETN3 and PCNT. Required to anchor microtubules to the centrosome. Probably involved in the biogenesis of cilia. This is Pericentriolar material 1 protein (PCM1) from Gallus gallus (Chicken).